Reading from the N-terminus, the 262-residue chain is Nodulation protein J (262 aa).

The ABC transmembrane type-2 domain occupies 33 to 259 (ASILGNLADP…FLSTALLRRR (227 aa)). The next 7 helical transmembrane spans lie at 35-55 (ILGNLADPLIYLFGLGAGLGM), 62-82 (GVSYIAFLSAGMVATSAMTAS), 102-122 (AILHTQVTIGDIVLGELAWAA), 127-147 (LAGTGIGVVAATLGYTEWVSL), 148-168 (LYALPVIALTGLAFASLAMIV), 177-197 (YFIFYQTLVITPMLFLSGAVF), and 231-251 (LVHVGLHIGALCCYAVVPFFL).

The protein belongs to the ABC-2 integral membrane protein family. Lipooligosaccharide exporter (TC 3.A.1.102) subfamily. The complex is composed of two ATP-binding proteins (NodI) and two transmembrane proteins (NodJ).

The protein resides in the cell inner membrane. Functionally, part of the ABC transporter complex NodIJ involved in the export of the nodulation factors (Nod factors), the bacterial signal molecules that induce symbiosis and subsequent nodulation induction. Nod factors are LCO (lipo-chitin oligosaccharide), a modified beta-1,4-linked N-acetylglucosamine oligosaccharide. This subunit encodes the transporter. In Rhizobium meliloti (strain 1021) (Ensifer meliloti), this protein is Nodulation protein J (nodJ).